A 603-amino-acid chain; its full sequence is NADPH-dependent diflavin oxidoreductase 1 (603 aa).

The Flavodoxin-like domain maps to Val10–Leu155. FMN-binding positions include Ser16–Ala21, Ser64–Gly67, Ile102–Asn111, and Glu137. The FAD-binding FR-type domain maps to Thr209–Pro451. FAD-binding positions include Arg359, Arg390–Ser393, and Gly422–Thr425. NADP(+) contacts are provided by residues Thr465 and Ser521–Arg522. Trp603 is an FAD binding site.

It belongs to the NADPH-dependent diflavin oxidoreductase NDOR1 family. In the N-terminal section; belongs to the flavodoxin family. This sequence in the C-terminal section; belongs to the flavoprotein pyridine nucleotide cytochrome reductase family. Interacts with DRE2; as part of the cytosolic iron-sulfur (Fe-S) protein assembly (CIA) machinery. The cofactor is FAD. FMN is required as a cofactor.

It is found in the cytoplasm. The protein resides in the mitochondrion. It catalyses the reaction 2 oxidized [2Fe-2S]-[protein] + NADPH = 2 reduced [2Fe-2S]-[protein] + NADP(+) + H(+). Functionally, NADPH-dependent reductase which is a central component of the cytosolic iron-sulfur (Fe-S) protein assembly (CIA) machinery. Transfers electrons from NADPH via its FAD and FMN prosthetic groups to the [2Fe-2S] cluster of DRE2, another key component of the CIA machinery. In turn, this reduced cluster provides electrons for assembly of cytosolic iron-sulfur cluster proteins. Positively controls H(2)O(2)-induced cell death. This is NADPH-dependent diflavin oxidoreductase 1 from Debaryomyces hansenii (strain ATCC 36239 / CBS 767 / BCRC 21394 / JCM 1990 / NBRC 0083 / IGC 2968) (Yeast).